The primary structure comprises 276 residues: Merozoite surface protein 2 (276 aa).

The signal sequence occupies residues 1 to 20 (MKVIKTLSIINFFIFVTFNI). N22 and N36 each carry an N-linked (GlcNAc...) asparagine glycan. The interval 44–202 (AESNPSTGAG…EQTESPELQS (159 aa)) is polymorphic region. Residues 44–242 (AESNPSTGAG…CTDGNKENCG (199 aa)) are disordered. The segment covering 51–90 (GAGGSGSAGGSGSAGGSGSAGGSGSAGGSGSAGSGDGNGA) has biased composition (gly residues). Repeat copies occupy residues 53–58 (GGSGSA), 59–64 (GGSGSA), 65–70 (GGSGSA), 71–76 (GGSGSA), and 77–82 (GGSGSA). The 5 X 6 AA tandem repeats of G-G-S-G-S-A stretch occupies residues 53–82 (GGSGSAGGSGSAGGSGSAGGSGSAGGSGSA). The segment covering 91–127 (NPGADAERSPSTPATTTTTTTTNDAEASTSTSSENPN) has biased composition (low complexity). 3 stretches are compositionally biased toward polar residues: residues 143-169 (KPNQANKETQNNSNVQQDSQTKSNVPP), 176-187 (KSPTAQPEQAEN), and 194-204 (QTESPELQSAP). N-linked (GlcNAc...) asparagine glycosylation is present at N153. N225 carries an N-linked (GlcNAc...) asparagine glycan. A compositionally biased stretch (basic and acidic residues) spans 229–238 (SQKECTDGNK). The cysteines at positions 233 and 241 are disulfide-linked. A glycan (N-linked (GlcNAc...) asparagine) is linked at N250. A lipid anchor (GPI-anchor amidated asparagine) is attached at N250. Residues 251-276 (SSNIASINKFVVLISATLVLSFAIFI) constitute a propeptide, removed in mature form.

Its subcellular location is the cell membrane. Its function is as follows. May play a role in the merozoite attachment to the erythrocyte. This is Merozoite surface protein 2 from Plasmodium falciparum (isolate 7G8).